The primary structure comprises 104 residues: uncharacterized protein (104 aa).

Residues Leu72–Ile92 traverse the membrane as a helical segment.

Its subcellular location is the membrane. This is an uncharacterized protein from Saccharomyces cerevisiae (strain ATCC 204508 / S288c) (Baker's yeast).